An 823-amino-acid chain; its full sequence is Aminopeptidase O (823 aa).

H481 serves as a coordination point for Zn(2+). Residue E482 is the Proton acceptor of the active site. 2 residues coordinate Zn(2+): H485 and E504. The Nucleolar localization signal signature appears at 693-703; sequence RRPRKRKRGKR.

It belongs to the peptidase M1 family. Zn(2+) is required as a cofactor. In terms of tissue distribution, expressed in testis, heart, brain, lung, liver, skeletal muscle, kidney and ovary. Expressed in vascular tissues.

It is found in the nucleus. Its subcellular location is the nucleolus. The protein localises to the cytoplasm. In terms of biological role, aminopeptidase which catalyzes the hydrolysis of amino acid residues from the N-terminus of peptide or protein substrates. The sequence is that of Aminopeptidase O (Aopep) from Mus musculus (Mouse).